A 133-amino-acid chain; its full sequence is Small ribosomal subunit protein mS23 (133 aa).

Belongs to the mitochondrion-specific ribosomal protein mS23 family. Component of the mitochondrial ribosome small subunit (28S) which comprises a 12S rRNA and about 30 distinct proteins.

The protein localises to the mitochondrion. In Caenorhabditis elegans, this protein is Small ribosomal subunit protein mS23 (mrps-23).